A 513-amino-acid chain; its full sequence is ATP synthase subunit alpha (513 aa).

169 to 176 (GDRQTGKT) contacts ATP.

This sequence belongs to the ATPase alpha/beta chains family. In terms of assembly, F-type ATPases have 2 components, CF(1) - the catalytic core - and CF(0) - the membrane proton channel. CF(1) has five subunits: alpha(3), beta(3), gamma(1), delta(1), epsilon(1). CF(0) has three main subunits: a(1), b(2) and c(9-12). The alpha and beta chains form an alternating ring which encloses part of the gamma chain. CF(1) is attached to CF(0) by a central stalk formed by the gamma and epsilon chains, while a peripheral stalk is formed by the delta and b chains.

The protein localises to the cell inner membrane. The enzyme catalyses ATP + H2O + 4 H(+)(in) = ADP + phosphate + 5 H(+)(out). In terms of biological role, produces ATP from ADP in the presence of a proton gradient across the membrane. The alpha chain is a regulatory subunit. The sequence is that of ATP synthase subunit alpha from Bordetella petrii (strain ATCC BAA-461 / DSM 12804 / CCUG 43448).